Consider the following 149-residue polypeptide: Nucleoside diphosphate kinase (149 aa).

Residues Lys9, Phe57, Arg85, Thr91, Arg102, and Asn112 each coordinate ATP. His115 (pros-phosphohistidine intermediate) is an active-site residue.

It belongs to the NDK family. Homotetramer. Mg(2+) is required as a cofactor.

The protein localises to the cytoplasm. The enzyme catalyses a 2'-deoxyribonucleoside 5'-diphosphate + ATP = a 2'-deoxyribonucleoside 5'-triphosphate + ADP. The catalysed reaction is a ribonucleoside 5'-diphosphate + ATP = a ribonucleoside 5'-triphosphate + ADP. Its function is as follows. Major role in the synthesis of nucleoside triphosphates other than ATP. The ATP gamma phosphate is transferred to the NDP beta phosphate via a ping-pong mechanism, using a phosphorylated active-site intermediate. In Thermomicrobium roseum (strain ATCC 27502 / DSM 5159 / P-2), this protein is Nucleoside diphosphate kinase.